Reading from the N-terminus, the 102-residue chain is MTKSLKHKYVLRLDVHLGSSPVSSLSVVTDSVVGSQSDPLWQWSVLLLSLSHFLLDSERLLSLIKRETYRAHTKCTIVKNVSNNVQTHQYDAFTDPRQYHLT.

This is an uncharacterized protein from Saccharomyces cerevisiae (strain ATCC 204508 / S288c) (Baker's yeast).